Consider the following 198-residue polypeptide: MSSIELLIIAVGLSMDAFAVAICKGLSMKKMSYRNAVLTGCFFGGFQALMPLLGYLLGTQFKDYITSIDHWIAFGLLSLIGINMIKESKNTCEITDEDDTFSLKSLTVMAFATSIDALAIGVTFAFLQVNIIPAVTMIGITTFTFSFLGVKIGNLFGVKFQSKAEIVGGLILIGMGCKILFDHLGVISFVFDSLNKFN.

A run of 6 helical transmembrane segments spans residues 3–23 (SIEL…VAIC), 37–57 (VLTG…GYLL), 65–85 (ITSI…INMI), 105–127 (SLTV…FAFL), 131–153 (IIPA…VKIG), and 171–191 (ILIG…SFVF).

It belongs to the MntP (TC 9.B.29) family.

It localises to the cell membrane. Its function is as follows. Probably functions as a manganese efflux pump. This Acetivibrio thermocellus (strain ATCC 27405 / DSM 1237 / JCM 9322 / NBRC 103400 / NCIMB 10682 / NRRL B-4536 / VPI 7372) (Clostridium thermocellum) protein is Putative manganese efflux pump MntP.